The primary structure comprises 213 residues: Adenylate kinase (213 aa).

10 to 15 (GSGKGT) is a binding site for ATP. Positions 30–59 (STGDMLRTTVNKESVLGKNIQAIIKLGNLV) are NMP. AMP-binding positions include Thr31, Arg36, 57–59 (NLV), 85–88 (GFPR), and Gln92. The interval 122–159 (GRMVHEPSGRIYHVTFNPPKQKGKDDITGENLIIRQDD) is LID. ATP-binding positions include Arg123 and 132 to 133 (IY). AMP contacts are provided by Arg156 and Arg167. Residue Cys199 participates in ATP binding.

This sequence belongs to the adenylate kinase family. In terms of assembly, monomer.

It localises to the cytoplasm. It carries out the reaction AMP + ATP = 2 ADP. Its pathway is purine metabolism; AMP biosynthesis via salvage pathway; AMP from ADP: step 1/1. Catalyzes the reversible transfer of the terminal phosphate group between ATP and AMP. Plays an important role in cellular energy homeostasis and in adenine nucleotide metabolism. The protein is Adenylate kinase of Baumannia cicadellinicola subsp. Homalodisca coagulata.